Reading from the N-terminus, the 1398-residue chain is DNA-directed RNA polymerase subunit beta' (1398 aa).

Positions 73, 75, 88, and 91 each coordinate Zn(2+). Asp464, Asp466, and Asp468 together coordinate Mg(2+). Zn(2+) is bound by residues Cys823, Cys897, Cys904, and Cys907.

Belongs to the RNA polymerase beta' chain family. In terms of assembly, the RNAP catalytic core consists of 2 alpha, 1 beta, 1 beta' and 1 omega subunit. When a sigma factor is associated with the core the holoenzyme is formed, which can initiate transcription. Mg(2+) is required as a cofactor. It depends on Zn(2+) as a cofactor.

The catalysed reaction is RNA(n) + a ribonucleoside 5'-triphosphate = RNA(n+1) + diphosphate. Its function is as follows. DNA-dependent RNA polymerase catalyzes the transcription of DNA into RNA using the four ribonucleoside triphosphates as substrates. The chain is DNA-directed RNA polymerase subunit beta' from Gluconacetobacter diazotrophicus (strain ATCC 49037 / DSM 5601 / CCUG 37298 / CIP 103539 / LMG 7603 / PAl5).